The chain runs to 264 residues: Phosphatidylglycerol--prolipoprotein diacylglyceryl transferase (264 aa).

Transmembrane regions (helical) follow at residues 14 to 34 (VGPL…LLFM), 57 to 77 (LLLY…VLFF), 89 to 109 (ILAI…VLVA), 127 to 147 (FIAP…FING), 176 to 196 (QLYQ…VYSA), 202 to 222 (KAVS…AEFF), and 235 to 255 (LGLS…VGLL). Residue R140 participates in a 1,2-diacyl-sn-glycero-3-phospho-(1'-sn-glycerol) binding.

It belongs to the Lgt family.

It localises to the cell inner membrane. It catalyses the reaction L-cysteinyl-[prolipoprotein] + a 1,2-diacyl-sn-glycero-3-phospho-(1'-sn-glycerol) = an S-1,2-diacyl-sn-glyceryl-L-cysteinyl-[prolipoprotein] + sn-glycerol 1-phosphate + H(+). The protein operates within protein modification; lipoprotein biosynthesis (diacylglyceryl transfer). In terms of biological role, catalyzes the transfer of the diacylglyceryl group from phosphatidylglycerol to the sulfhydryl group of the N-terminal cysteine of a prolipoprotein, the first step in the formation of mature lipoproteins. The sequence is that of Phosphatidylglycerol--prolipoprotein diacylglyceryl transferase from Aromatoleum aromaticum (strain DSM 19018 / LMG 30748 / EbN1) (Azoarcus sp. (strain EbN1)).